A 451-amino-acid polypeptide reads, in one-letter code: UDP-N-acetylmuramate--L-alanine ligase (451 aa).

Residue 110 to 116 (GTHGKTT) participates in ATP binding.

This sequence belongs to the MurCDEF family.

The protein localises to the cytoplasm. It catalyses the reaction UDP-N-acetyl-alpha-D-muramate + L-alanine + ATP = UDP-N-acetyl-alpha-D-muramoyl-L-alanine + ADP + phosphate + H(+). It participates in cell wall biogenesis; peptidoglycan biosynthesis. Its function is as follows. Cell wall formation. The polypeptide is UDP-N-acetylmuramate--L-alanine ligase (Francisella tularensis subsp. holarctica (strain FTNF002-00 / FTA)).